We begin with the raw amino-acid sequence, 348 residues long: Oxygen-dependent coproporphyrinogen-III oxidase (348 aa).

Position 104 (S104) interacts with substrate. A divalent metal cation-binding residues include H108 and H118. H118 functions as the Proton donor in the catalytic mechanism. Position 120–122 (120–122 (NYR)) interacts with substrate. A divalent metal cation contacts are provided by H152 and H182. The important for dimerization stretch occupies residues 272 to 307 (YAEFNLVWDRGTIFGLQTNGRTESILMSLPPLARWE).

It belongs to the aerobic coproporphyrinogen-III oxidase family. Homodimer. The cofactor is a divalent metal cation.

It is found in the cytoplasm. It carries out the reaction coproporphyrinogen III + O2 + 2 H(+) = protoporphyrinogen IX + 2 CO2 + 2 H2O. It functions in the pathway porphyrin-containing compound metabolism; protoporphyrin-IX biosynthesis; protoporphyrinogen-IX from coproporphyrinogen-III (O2 route): step 1/1. In terms of biological role, involved in the heme and chlorophyll biosynthesis. Catalyzes the aerobic oxidative decarboxylation of propionate groups of rings A and B of coproporphyrinogen-III to yield the vinyl groups in protoporphyrinogen-IX. The protein is Oxygen-dependent coproporphyrinogen-III oxidase of Prochlorococcus marinus (strain NATL2A).